Here is a 193-residue protein sequence, read N- to C-terminus: Fra a 1-associated protein (193 aa).

The segment at 1 to 27 (MGWVWKDDDEQGGHVNPSAADISPRLD) is disordered.

Interacts with FRAA1E, FRAA2 and FRAA3.

The sequence is that of Fra a 1-associated protein from Fragaria ananassa (Strawberry).